A 122-amino-acid chain; its full sequence is Ribosome-binding factor A (122 aa).

The protein belongs to the RbfA family. As to quaternary structure, monomer. Binds 30S ribosomal subunits, but not 50S ribosomal subunits or 70S ribosomes.

Its subcellular location is the cytoplasm. One of several proteins that assist in the late maturation steps of the functional core of the 30S ribosomal subunit. Associates with free 30S ribosomal subunits (but not with 30S subunits that are part of 70S ribosomes or polysomes). Required for efficient processing of 16S rRNA. May interact with the 5'-terminal helix region of 16S rRNA. In Albidiferax ferrireducens (strain ATCC BAA-621 / DSM 15236 / T118) (Rhodoferax ferrireducens), this protein is Ribosome-binding factor A.